A 389-amino-acid chain; its full sequence is Probable nitrate transporter NarT (389 aa).

A run of 12 helical transmembrane segments spans residues 14-34 (TLSL…MPFI), 45-65 (ISII…PFGY), 69-89 (IVGA…PIFF), 97-117 (GMLM…SVGV), 139-159 (GNIG…IIGW), 161-181 (TTVR…FIFG), 211-231 (WYFI…NYLV), 246-266 (GVFI…GDKF), 268-288 (AVKV…ILGI), 294-314 (LFTV…GLIF), 331-351 (IVSM…TYVA), and 353-373 (LTGS…IALF).

It belongs to the major facilitator superfamily. Nitrate/nitrite porter (TC 2.A.1.8) family.

It localises to the cell membrane. Functionally, probably required for nitrate uptake under anoxic conditions. Also possibly involved in excretion of nitrite produced by the dissimilatory reduction of nitrate. This is Probable nitrate transporter NarT (narT) from Staphylococcus aureus (strain bovine RF122 / ET3-1).